A 165-amino-acid polypeptide reads, in one-letter code: Cytochrome c-type biogenesis protein CcmE (165 aa).

Residues 1–29 (MSATAEDNARGAKPAGNFARTVSQRKRKR) are Cytoplasmic-facing. The helical; Signal-anchor for type II membrane protein transmembrane segment at 30-50 (LFLIGGALAVLAVAVGLMLMA) threads the bilayer. The Periplasmic portion of the chain corresponds to 51–165 (FSQDIRFFRT…LKEKGVWEGK (115 aa)). H143 and Y147 together coordinate heme.

The protein belongs to the CcmE/CycJ family.

It is found in the cell inner membrane. Its function is as follows. Heme chaperone required for the biogenesis of c-type cytochromes. Transiently binds heme delivered by CcmC and transfers the heme to apo-cytochromes in a process facilitated by CcmF and CcmH. This Brucella anthropi (strain ATCC 49188 / DSM 6882 / CCUG 24695 / JCM 21032 / LMG 3331 / NBRC 15819 / NCTC 12168 / Alc 37) (Ochrobactrum anthropi) protein is Cytochrome c-type biogenesis protein CcmE.